The sequence spans 81 residues: Acyl carrier protein (81 aa).

The Carrier domain maps to 2–80; that stretch reads SKVDNIEQKV…DVVNYIKEHK (79 aa). An O-(pantetheine 4'-phosphoryl)serine modification is found at serine 40.

This sequence belongs to the acyl carrier protein (ACP) family. 4'-phosphopantetheine is transferred from CoA to a specific serine of apo-ACP by AcpS. This modification is essential for activity because fatty acids are bound in thioester linkage to the sulfhydryl of the prosthetic group.

The protein resides in the cytoplasm. It participates in lipid metabolism; fatty acid biosynthesis. Its function is as follows. Carrier of the growing fatty acid chain in fatty acid biosynthesis. The chain is Acyl carrier protein from Rickettsia bellii (strain OSU 85-389).